The sequence spans 566 residues: Proline--tRNA ligase (566 aa).

Belongs to the class-II aminoacyl-tRNA synthetase family. ProS type 1 subfamily. In terms of assembly, homodimer.

Its subcellular location is the cytoplasm. The enzyme catalyses tRNA(Pro) + L-proline + ATP = L-prolyl-tRNA(Pro) + AMP + diphosphate. Functionally, catalyzes the attachment of proline to tRNA(Pro) in a two-step reaction: proline is first activated by ATP to form Pro-AMP and then transferred to the acceptor end of tRNA(Pro). As ProRS can inadvertently accommodate and process non-cognate amino acids such as alanine and cysteine, to avoid such errors it has two additional distinct editing activities against alanine. One activity is designated as 'pretransfer' editing and involves the tRNA(Pro)-independent hydrolysis of activated Ala-AMP. The other activity is designated 'posttransfer' editing and involves deacylation of mischarged Ala-tRNA(Pro). The misacylated Cys-tRNA(Pro) is not edited by ProRS. This Bacillus cereus (strain G9842) protein is Proline--tRNA ligase.